The following is a 311-amino-acid chain: tRNA dimethylallyltransferase (311 aa).

12–19 (GPTASGKT) contacts ATP. Position 14–19 (14–19 (TASGKT)) interacts with substrate. Interaction with substrate tRNA regions lie at residues 37 to 40 (DSAM) and 161 to 165 (QRIQR).

This sequence belongs to the IPP transferase family. Monomer. Mg(2+) is required as a cofactor.

The enzyme catalyses adenosine(37) in tRNA + dimethylallyl diphosphate = N(6)-dimethylallyladenosine(37) in tRNA + diphosphate. Its function is as follows. Catalyzes the transfer of a dimethylallyl group onto the adenine at position 37 in tRNAs that read codons beginning with uridine, leading to the formation of N6-(dimethylallyl)adenosine (i(6)A). The sequence is that of tRNA dimethylallyltransferase from Coxiella burnetii (strain Dugway 5J108-111).